The following is a 363-amino-acid chain: MNGSPTPKRYSSKSSRLYDDYYNIPYQYSNPTPMNRDYNDVGSRINADKLVPEEYKRNTEFINKAVQQNKELNFKLREKQNEIFELKKIAETLRSKLEKYVDITKKLEDQNLNLQIKISDLEKKLSDANSTFKEMRFPKVKDPMVDDDPVSENYDQINVPKHRAPDATGNPRTTNKVSNTSDQDSRLKAIERTLSVLTNYVMRSEDGNNDRMSPLPSPLNTILPINNRLNFQEPKRYNPTVKVNPSDDDIMMYESAELKRVEEEIEELKRKILVRKKHDLRKLSLNNQLQELQSMMDGDDNIKLDNVSKHNHATHRHSSQSSRDYSPSSDACLECSNDLYEKNRVKPENNMSETFATPTPNNR.

A coiled-coil region spans residues 60 to 137 (EFINKAVQQN…ANSTFKEMRF (78 aa)). The interval 160-184 (PKHRAPDATGNPRTTNKVSNTSDQD) is disordered. Residues 170–182 (NPRTTNKVSNTSD) are compositionally biased toward polar residues. 4 positions are modified to phosphoserine: Ser-213, Ser-217, Ser-284, and Ser-329. Residues 249-298 (DIMMYESAELKRVEEEIEELKRKILVRKKHDLRKLSLNNQLQELQSMMDG) adopt a coiled-coil conformation. Residues 310-363 (HNHATHRHSSQSSRDYSPSSDACLECSNDLYEKNRVKPENNMSETFATPTPNNR) form a disordered region. Residues 319–329 (SQSSRDYSPSS) are compositionally biased toward low complexity. The span at 349-363 (NNMSETFATPTPNNR) shows a compositional bias: polar residues.

It belongs to the SPC42 family. Component of the SPC110 complex containing at least CMD1, SPC29, SPC42 and SCP110.

It localises to the nucleus. The protein localises to the cytoplasm. The protein resides in the cytoskeleton. Its subcellular location is the microtubule organizing center. It is found in the spindle pole body. Functionally, forms a polymeric layer at the periphery of the spindle pole body (SPB) central plaque which has an essential function during SPB duplication and may facilitate attachment of the SPB to the nuclear membrane. This chain is Spindle pole body component SPC42 (SPC42), found in Saccharomyces cerevisiae (strain ATCC 204508 / S288c) (Baker's yeast).